A 312-amino-acid polypeptide reads, in one-letter code: Mas-related G-protein coupled receptor member B3 (312 aa).

At 1 to 31 (MALRTSLITTTAPDKTSLPISICIIKFQVMN) the chain is on the extracellular side. Residues 32-52 (LLSITISPVGMVLNIIVLWFL) form a helical membrane-spanning segment. At 53 to 67 (GFQICRNAFSAYILN) the chain is on the cytoplasmic side. A helical membrane pass occupies residues 68–88 (LAVADFLFLCSHSIFSFLIVC). Residues 89–106 (KLHYFLFYIRQLLDTVTM) lie on the Extracellular side of the membrane. Residues 107 to 127 (FAYVFGLSITTIISIECCLSI) traverse the membrane as a helical segment. Topologically, residues 128-140 (MWPIWYHCQRPRH) are cytoplasmic. The helical transmembrane segment at 141–161 (TSAVICVLLWALSLLFPALQM) threads the bilayer. Residues 162-180 (EKCSVLFNTFEYSWCGIIN) lie on the Extracellular side of the membrane. The helical transmembrane segment at 181–201 (IISGAWLVVLFVVLCGFSLIL) threads the bilayer. At 202–220 (LLRISCGSQQIPVTRLNVT) the chain is on the cytoplasmic side. Residues 221-241 (IALRVLLLLIFGIPFGIFWIV) traverse the membrane as a helical segment. The Extracellular segment spans residues 242-259 (DKWNEENFFVRACGFSHH). A helical transmembrane segment spans residues 260-280 (ILYVYCINICVNATIYFLVGS). At 281-312 (IRHGKFQKMTLKLILQRAIQGTPEEEGGERGP) the chain is on the cytoplasmic side.

The protein belongs to the G-protein coupled receptor 1 family. Mas subfamily.

It localises to the membrane. Orphan receptor. Probably involved in the function of nociceptive neurons. May regulate nociceptor function and/or development, including the sensation or modulation of pain. This Mus musculus (Mouse) protein is Mas-related G-protein coupled receptor member B3 (Mrgprb3).